The sequence spans 359 residues: tRNA N6-adenosine threonylcarbamoyltransferase (359 aa).

Residues H115 and H119 each coordinate Fe cation. Residues 137 to 141 (LVSGG), D170, G183, and N283 contribute to the substrate site. Fe cation is bound at residue D311. The interval 328-359 (APDSLDLAPRSRWPLDEKSAPLIGTGRRGAKA) is disordered.

The protein belongs to the KAE1 / TsaD family. Fe(2+) serves as cofactor.

It is found in the cytoplasm. The catalysed reaction is L-threonylcarbamoyladenylate + adenosine(37) in tRNA = N(6)-L-threonylcarbamoyladenosine(37) in tRNA + AMP + H(+). Its function is as follows. Required for the formation of a threonylcarbamoyl group on adenosine at position 37 (t(6)A37) in tRNAs that read codons beginning with adenine. Is involved in the transfer of the threonylcarbamoyl moiety of threonylcarbamoyl-AMP (TC-AMP) to the N6 group of A37, together with TsaE and TsaB. TsaD likely plays a direct catalytic role in this reaction. The sequence is that of tRNA N6-adenosine threonylcarbamoyltransferase from Brucella anthropi (strain ATCC 49188 / DSM 6882 / CCUG 24695 / JCM 21032 / LMG 3331 / NBRC 15819 / NCTC 12168 / Alc 37) (Ochrobactrum anthropi).